The following is an 81-amino-acid chain: MEGKPQRKQNKYKKKVCRFTADPELAKQINYKNIELLERFITNRGKIIPRRITGTSARYQRVLAREIRKARSIGLLPYKVN.

The protein belongs to the bacterial ribosomal protein bS18 family. In terms of assembly, part of the 30S ribosomal subunit. Forms a tight heterodimer with protein bS6.

Its function is as follows. Binds as a heterodimer with protein bS6 to the central domain of the 16S rRNA, where it helps stabilize the platform of the 30S subunit. The sequence is that of Small ribosomal subunit protein bS18 from Leptospira borgpetersenii serovar Hardjo-bovis (strain JB197).